The sequence spans 1063 residues: Kinesin-like protein KIN-7H (1063 aa).

Positions 18-342 constitute a Kinesin motor domain; that stretch reads KIYVSVRMRP…LLFASCAKEV (325 aa). 106–113 provides a ligand contact to ATP; the sequence is GQTSSGKT. The stretch at 351 to 436 forms a coiled coil; it reads VMSDKALVKH…KNQEKETLST (86 aa). The tract at residues 574 to 664 is disordered; the sequence is SDISIGPVEN…ESNLTKNPAL (91 aa).

The protein belongs to the TRAFAC class myosin-kinesin ATPase superfamily. Kinesin family. KIN-7 subfamily.

In Arabidopsis thaliana (Mouse-ear cress), this protein is Kinesin-like protein KIN-7H.